Here is a 409-residue protein sequence, read N- to C-terminus: Histidine--tRNA ligase (409 aa).

Belongs to the class-II aminoacyl-tRNA synthetase family. As to quaternary structure, homodimer.

The protein localises to the cytoplasm. It catalyses the reaction tRNA(His) + L-histidine + ATP = L-histidyl-tRNA(His) + AMP + diphosphate + H(+). The sequence is that of Histidine--tRNA ligase from Campylobacter fetus subsp. fetus (strain 82-40).